The chain runs to 519 residues: Glucoamylase GLA1 (519 aa).

The first 27 residues, 1-27 (MRFGVLISVFVAIVSALPLQEGPLNKR), serve as a signal peptide directing secretion. Residues Asn-115 and Asn-127 are each glycosylated (N-linked (GlcNAc...) asparagine). Trp-166 serves as a coordination point for substrate. Asn-205 is a glycosylation site (N-linked (GlcNAc...) asparagine). Asp-234 serves as the catalytic Proton acceptor. Catalysis depends on Glu-237, which acts as the Proton donor.

Belongs to the glycosyl hydrolase 15 family.

It catalyses the reaction Hydrolysis of terminal (1-&gt;4)-linked alpha-D-glucose residues successively from non-reducing ends of the chains with release of beta-D-glucose.. The chain is Glucoamylase GLA1 (GLA1) from Saccharomycopsis fibuligera (Yeast).